The sequence spans 1034 residues: Presequence protease, mitochondrial (1034 aa).

A mitochondrion-targeting transit peptide spans 1-26 (MLKTRLKQSRAISRVVRRYACSHPIS). Residue H97 participates in Zn(2+) binding. Catalysis depends on E100, which acts as the Proton acceptor. Residue H101 coordinates Zn(2+). Residue E173 is part of the active site. E198 contacts Zn(2+).

The protein belongs to the peptidase M16 family. PreP subfamily. Monomer and homodimer; homodimerization is induced by binding of the substrate. Zn(2+) serves as cofactor.

It is found in the mitochondrion intermembrane space. Its subcellular location is the mitochondrion matrix. Functionally, degrades mitochondrial transit peptides after their cleavage in the intermembrane space or in the matrix, and presequence peptides; clearance of these peptides is required to keep the presequence processing machinery running. Preferentially cleaves the N-terminal side of paired basic amino acid residues. Also degrades other unstructured peptides. May function as an ATP-dependent peptidase as opposed to a metalloendopeptidase. This chain is Presequence protease, mitochondrial (CYM1), found in Candida albicans (strain SC5314 / ATCC MYA-2876) (Yeast).